The primary structure comprises 48 residues: Small polypeptide DEVIL 22 (48 aa).

Residues 7-23 form a helical membrane-spanning segment; that stretch reads KLNKGHAFTSKCASLVK. The interval 13–44 is required for DVL/RTFL small polypeptide activity; that stretch reads AFTSKCASLVKEQRARLYILRRCATMLCCWYI.

The protein belongs to the DVL/RTFL small polypeptides family.

It is found in the cell membrane. Its function is as follows. Small polypeptide acting as a regulatory molecule which coordinates cellular responses required for differentiation, growth and development, probably by restricting polar cell proliferation in lateral organs and coordinating socket cell recruitment and differentiation at trichome sites. The sequence is that of Small polypeptide DEVIL 22 from Arabidopsis thaliana (Mouse-ear cress).